The primary structure comprises 399 residues: Tryptophan synthase beta chain (399 aa).

The residue at position 92 (lysine 92) is an N6-(pyridoxal phosphate)lysine.

This sequence belongs to the TrpB family. As to quaternary structure, tetramer of two alpha and two beta chains. Pyridoxal 5'-phosphate is required as a cofactor.

It catalyses the reaction (1S,2R)-1-C-(indol-3-yl)glycerol 3-phosphate + L-serine = D-glyceraldehyde 3-phosphate + L-tryptophan + H2O. The protein operates within amino-acid biosynthesis; L-tryptophan biosynthesis; L-tryptophan from chorismate: step 5/5. In terms of biological role, the beta subunit is responsible for the synthesis of L-tryptophan from indole and L-serine. In Nitrosomonas eutropha (strain DSM 101675 / C91 / Nm57), this protein is Tryptophan synthase beta chain.